Here is a 212-residue protein sequence, read N- to C-terminus: Phosphatidylserine decarboxylase proenzyme (212 aa).

Ser-182 serves as the catalytic Schiff-base intermediate with substrate; via pyruvic acid. Residue Ser-182 is modified to Pyruvic acid (Ser); by autocatalysis.

It belongs to the phosphatidylserine decarboxylase family. PSD-A subfamily. As to quaternary structure, heterodimer of a large membrane-associated beta subunit and a small pyruvoyl-containing alpha subunit. Requires pyruvate as cofactor. In terms of processing, is synthesized initially as an inactive proenzyme. Formation of the active enzyme involves a self-maturation process in which the active site pyruvoyl group is generated from an internal serine residue via an autocatalytic post-translational modification. Two non-identical subunits are generated from the proenzyme in this reaction, and the pyruvate is formed at the N-terminus of the alpha chain, which is derived from the carboxyl end of the proenzyme. The post-translation cleavage follows an unusual pathway, termed non-hydrolytic serinolysis, in which the side chain hydroxyl group of the serine supplies its oxygen atom to form the C-terminus of the beta chain, while the remainder of the serine residue undergoes an oxidative deamination to produce ammonia and the pyruvoyl prosthetic group on the alpha chain.

The protein localises to the cell membrane. The catalysed reaction is a 1,2-diacyl-sn-glycero-3-phospho-L-serine + H(+) = a 1,2-diacyl-sn-glycero-3-phosphoethanolamine + CO2. It functions in the pathway phospholipid metabolism; phosphatidylethanolamine biosynthesis; phosphatidylethanolamine from CDP-diacylglycerol: step 2/2. Functionally, catalyzes the formation of phosphatidylethanolamine (PtdEtn) from phosphatidylserine (PtdSer). This is Phosphatidylserine decarboxylase proenzyme from Chlorobium luteolum (strain DSM 273 / BCRC 81028 / 2530) (Pelodictyon luteolum).